An 87-amino-acid chain; its full sequence is NAD(P)H-quinone oxidoreductase subunit O (87 aa).

Residues 1–10 (MSEQTGKVDD) are compositionally biased toward basic and acidic residues. Positions 1-23 (MSEQTGKVDDSQSPPKVQKKLRK) are disordered.

It belongs to the complex I NdhO subunit family. As to quaternary structure, NDH-1 can be composed of about 15 different subunits; different subcomplexes with different compositions have been identified which probably have different functions.

It localises to the cellular thylakoid membrane. It carries out the reaction a plastoquinone + NADH + (n+1) H(+)(in) = a plastoquinol + NAD(+) + n H(+)(out). The catalysed reaction is a plastoquinone + NADPH + (n+1) H(+)(in) = a plastoquinol + NADP(+) + n H(+)(out). In terms of biological role, NDH-1 shuttles electrons from an unknown electron donor, via FMN and iron-sulfur (Fe-S) centers, to quinones in the respiratory and/or the photosynthetic chain. The immediate electron acceptor for the enzyme in this species is believed to be plastoquinone. Couples the redox reaction to proton translocation, and thus conserves the redox energy in a proton gradient. Cyanobacterial NDH-1 also plays a role in inorganic carbon-concentration. The chain is NAD(P)H-quinone oxidoreductase subunit O from Prochlorococcus marinus (strain NATL2A).